Reading from the N-terminus, the 475-residue chain is MAAPRPPPARLSGIMVPAPIQDLEALRALTALFKEQRNRETAPRTIFQRVLDILKKSSHAVELACRDPSQVENLASSLQLITECFRCLRNACIECSVNQNSIRNLDTIGVAVDLILLFRELRVEQEALLTAFRCGLQFLGNIASRNEDSQSIVWVHAFPELFLSCLNHPDKKIVAYSSMILFTSLNHERMKELEENLNIAIDVIDAYQKHPESEWPVLIITDLFLKSPELVQAMFPKLNNQERVTLLDLMIAKITSDEPLTTDDIPVFLRHAELIASTFVDQCKTVLKLASEEPPDDEEALATIRLLDVLCEMTANTELLGYLQVFPGLLERVIDLLRVIHVTGKETTNIFSNCGCVRAEGDISNVAEGFKSHLIRLIGNLCYKNKDNQDKVNELDGIPLILDNCNISDSNPFLTQWVIYAIRNLTEDNSQNQDLIAKMEEQGLADASLLKKVGFEVEKKGEKLILKSTRDTPKP.

Residue Arg10 is modified to Omega-N-methylarginine. 2 positions are modified to phosphoserine: Ser12 and Ser77. The residue at position 82 (Thr82) is a Phosphothreonine. Residue Ser430 is modified to Phosphoserine.

It belongs to the ataxin-10 family. Homooligomer. Interacts with GNB2. Interacts with IQCB1. Interacts with OGT. Polyubiquitinated. In terms of processing, phosphorylation at Ser-12 by AURKB promotes the association of ATXN10 with PLK1. Phosphorylation at Ser-77 and Thr-82 by PLK1 may play a role in the regulation of cytokinesis and may stimulate the proteasome-mediated degradation of ATXN10.

The protein resides in the cytoplasm. It localises to the perinuclear region. The protein localises to the midbody. Its subcellular location is the cytoskeleton. It is found in the cilium basal body. The protein resides in the microtubule organizing center. It localises to the centrosome. The protein localises to the centriole. In terms of biological role, may play a role in the regulation of cytokinesis. May play a role in signaling by stimulating protein glycosylation. Induces neuritogenesis by activating the Ras-MAP kinase pathway and is necessary for the survival of cerebellar neurons. Does not appear to play a major role in ciliogenesis. This Macaca fascicularis (Crab-eating macaque) protein is Ataxin-10 (ATXN10).